A 21-amino-acid chain; its full sequence is Peptide PGLa-R3 (21 aa).

The residue at position 21 (Leu21) is a Leucine amide.

Expressed by the skin glands.

The protein localises to the secreted. Its function is as follows. Antimicrobial peptide. The sequence is that of Peptide PGLa-R3 from Xenopus ruwenzoriensis (Uganda clawed frog).